The primary structure comprises 361 residues: Phosphoserine aminotransferase (361 aa).

L-glutamate contacts are provided by serine 9 and arginine 42. Pyridoxal 5'-phosphate is bound by residues 76 to 77 (AR), tryptophan 102, threonine 153, aspartate 173, and glutamine 196. Lysine 197 is subject to N6-(pyridoxal phosphate)lysine. Position 238–239 (238–239 (NT)) interacts with pyridoxal 5'-phosphate.

It belongs to the class-V pyridoxal-phosphate-dependent aminotransferase family. SerC subfamily. Homodimer. Requires pyridoxal 5'-phosphate as cofactor.

Its subcellular location is the cytoplasm. It catalyses the reaction O-phospho-L-serine + 2-oxoglutarate = 3-phosphooxypyruvate + L-glutamate. It carries out the reaction 4-(phosphooxy)-L-threonine + 2-oxoglutarate = (R)-3-hydroxy-2-oxo-4-phosphooxybutanoate + L-glutamate. It functions in the pathway amino-acid biosynthesis; L-serine biosynthesis; L-serine from 3-phospho-D-glycerate: step 2/3. Its pathway is cofactor biosynthesis; pyridoxine 5'-phosphate biosynthesis; pyridoxine 5'-phosphate from D-erythrose 4-phosphate: step 3/5. Functionally, catalyzes the reversible conversion of 3-phosphohydroxypyruvate to phosphoserine and of 3-hydroxy-2-oxo-4-phosphonooxybutanoate to phosphohydroxythreonine. In Erwinia tasmaniensis (strain DSM 17950 / CFBP 7177 / CIP 109463 / NCPPB 4357 / Et1/99), this protein is Phosphoserine aminotransferase.